The primary structure comprises 177 residues: Nucleoside triphosphate/diphosphate phosphatase (177 aa).

Arginine 23 serves as the catalytic Proton donor. Positions 87, 103, 105, 107, 120, and 123 each coordinate Mg(2+).

Belongs to the Ntdp family. The cofactor is Mg(2+).

It carries out the reaction a ribonucleoside 5'-triphosphate + H2O = a ribonucleoside 5'-diphosphate + phosphate + H(+). The catalysed reaction is a ribonucleoside 5'-diphosphate + H2O = a ribonucleoside 5'-phosphate + phosphate + H(+). In terms of biological role, has nucleoside phosphatase activity towards nucleoside triphosphates and nucleoside diphosphates. This chain is Nucleoside triphosphate/diphosphate phosphatase, found in Streptococcus gordonii (strain Challis / ATCC 35105 / BCRC 15272 / CH1 / DL1 / V288).